A 1137-amino-acid polypeptide reads, in one-letter code: DENN domain-containing protein 2B (1137 aa).

Residues 1–12 show a composition bias toward polar residues; sequence MTMTANKNSSIT. A disordered region spans residues 1-99; it reads MTMTANKNSS…PTCPFKTASF (99 aa). Phosphoserine occurs at positions 30 and 32. The segment covering 32–43 has biased composition (pro residues); that stretch reads SPPPVLSPPRSP. Residues 49–64 show a composition bias toward polar residues; it reads DSETSACRYPSHSSSR. The span at 73-92 shows a compositional bias: pro residues; the sequence is PAPSPQNPQDPSPDTSPPTC. Thr-231 is subject to Phosphothreonine. The residue at position 233 (Ser-233) is a Phosphoserine. A disordered region spans residues 293–573; sequence KEQPGRGLPQ…HRLPRLPKRH (281 aa). A compositionally biased stretch (low complexity) spans 324–348; it reads EEPAGGASVSAGSRAVGVAGVAGEA. Thr-364 bears the Phosphothreonine mark. Ser-368 carries the phosphoserine modification. Over residues 368-380 the composition is skewed to low complexity; sequence SPSSQRLPSKSSL. Basic and acidic residues predominate over residues 392–402; it reads RTFEYEADKNP. The interval 401-447 is interaction with ABL1; the sequence is NPKSKPSNGLPPSPTPAAPPPLPSTPAPPVTRRPKKDMRGHRKSQSR. A compositionally biased stretch (pro residues) spans 409–431; it reads GLPPSPTPAAPPPLPSTPAPPVT. Over residues 432–446 the composition is skewed to basic residues; that stretch reads RRPKKDMRGHRKSQS. Residues 456 to 481 are compositionally biased toward polar residues; the sequence is SSLQSLYPSSPTENGTENQPKFGSKS. Residue Thr-482 is modified to Phosphothreonine. Over residues 495–508 the composition is skewed to basic and acidic residues; it reads LPKENPYEDVDLKS. Polar residues-rich tracts occupy residues 514–524 and 539–558; these read KSQQLSENSLD and SPPTQLSLKPNSQSLRSGNW. Ser-545 carries the phosphoserine modification. Over residues 562-573 the composition is skewed to basic residues; it reads KSHRLPRLPKRH. Residues Ser-574 and Ser-622 each carry the phosphoserine modification. Positions 641-661 are disordered; it reads IETASLRDENSESESDSDDRF. The uDENN domain maps to 698 to 846; the sequence is EYFVVVSLKK…PFPAPGKTIK (149 aa). Residues 868–1001 form the cDENN domain; the sequence is RLEHVDFECL…LQAALEQALE (134 aa). The 94-residue stretch at 1003–1096 folds into the dDENN domain; sequence KNELISQDSD…QDRELRKCRA (94 aa).

In terms of assembly, interacts with ITSN1 and GRB2. Isoform 1 interacts with the SH3 domain of ABL1. Post-translationally, phosphorylated. Phosphorylation decreases ITSN1 binding. As to expression, widely expressed with the exception of peripheral blood lymphocytes. Isoform 1 is expressed in several epithelial and fibroblast (including tumorigenic) but absent in lymphoid cell lines (at protein level). Isoform 3 is expressed in primary cell or weakly tumorigenic but not in tumorigenic cell lines (at protein level).

The protein resides in the cytoplasm. The protein localises to the cell cortex. Its subcellular location is the cell membrane. It is found in the recycling endosome. Functionally, may be involved in cytoskeletal organization and tumorogenicity. Seems to be involved in a signaling transduction pathway leading to activation of MAPK1/ERK2. Plays a role in EGFR trafficking from recycling endosomes back to the cell membrane. In terms of biological role, guanine nucleotide exchange factor (GEF) which may activate RAB9A and RAB9B. Promotes the exchange of GDP to GTP, converting inactive GDP-bound Rab proteins into their active GTP-bound form. May block ERK2 activation stimulated by ABL1. May alter cell morphology and cell growth. This Homo sapiens (Human) protein is DENN domain-containing protein 2B.